The following is a 428-amino-acid chain: Trigger factor (428 aa).

Residues 163–248 (GDTAVIDFEG…IKEIKVKELP (86 aa)) form the PPIase FKBP-type domain.

It belongs to the FKBP-type PPIase family. Tig subfamily.

The protein localises to the cytoplasm. The enzyme catalyses [protein]-peptidylproline (omega=180) = [protein]-peptidylproline (omega=0). In terms of biological role, involved in protein export. Acts as a chaperone by maintaining the newly synthesized protein in an open conformation. Functions as a peptidyl-prolyl cis-trans isomerase. This Ruminiclostridium cellulolyticum (strain ATCC 35319 / DSM 5812 / JCM 6584 / H10) (Clostridium cellulolyticum) protein is Trigger factor.